The following is a 343-amino-acid chain: Phosphate acyltransferase (343 aa).

It belongs to the PlsX family. Homodimer. Probably interacts with PlsY.

The protein localises to the cytoplasm. The catalysed reaction is a fatty acyl-[ACP] + phosphate = an acyl phosphate + holo-[ACP]. Its pathway is lipid metabolism; phospholipid metabolism. In terms of biological role, catalyzes the reversible formation of acyl-phosphate (acyl-PO(4)) from acyl-[acyl-carrier-protein] (acyl-ACP). This enzyme utilizes acyl-ACP as fatty acyl donor, but not acyl-CoA. This chain is Phosphate acyltransferase, found in Halorhodospira halophila (strain DSM 244 / SL1) (Ectothiorhodospira halophila (strain DSM 244 / SL1)).